We begin with the raw amino-acid sequence, 480 residues long: DnaJ homolog subfamily A member 3, mitochondrial (480 aa).

Position 58 is an omega-N-methylarginine; by CARM1 (Arg-58). In terms of domain architecture, J spans 93 to 158 (DYYQILGVPR…VKRKQYDAYG (66 aa)). An N6-acetyllysine modification is found at Lys-134. The CR-type zinc finger occupies 223 to 301 (GVNKEFTVNI…CRGAGQAKQK (79 aa)). Position 236 (Cys-236) interacts with Zn(2+). CXXCXGXG motif repeat units follow at residues 236-243 (CERCNGKG), 253-260 (CHYCGGSG), 275-282 (CRRCGGRG), and 289-296 (CVVCRGAG). Arg-238 carries the post-translational modification Omega-N-methylarginine; by CARM1. Zn(2+) is bound by residues Cys-239, Cys-253, Cys-256, Cys-275, Cys-278, Cys-289, and Cys-292. At Arg-293 the chain carries Omega-N-methylarginine; by CARM1. The residue at position 398 (Ser-398) is a Phosphoserine. Over residues 443–456 (LTSSGGSTMDSSAG) the composition is skewed to polar residues. The tract at residues 443-471 (LTSSGGSTMDSSAGSKARREAGEDEEGFL) is disordered.

Interacts with JAK2, HSPA9B and IFN-gammaR2 chain. Interacts with Ras GTPase-activating protein 1 (RASA1). Isoform 2 interacts with MUSK (via the cytoplasmic domain). Tyrosine phosphorylated. Widely expressed with highest levels in heart, liver, lung and skeletal muscles. Also expressed in keratinocytes; expression level and distribution is altered in basal cell carcinomas.

Its subcellular location is the mitochondrion matrix. The protein resides in the cytoplasm. The protein localises to the cytosol. It localises to the postsynaptic cell membrane. Functionally, modulates apoptotic signal transduction or effector structures within the mitochondrial matrix. Affect cytochrome C release from the mitochondria and caspase 3 activation, but not caspase 8 activation. Isoform 1 increases apoptosis triggered by both TNF and the DNA-damaging agent mytomycin C; in sharp contrast, isoform 2 suppresses apoptosis. Can modulate IFN-gamma-mediated transcriptional activity. Isoform 2 may play a role in neuromuscular junction development as an effector of the MUSK signaling pathway. In Homo sapiens (Human), this protein is DnaJ homolog subfamily A member 3, mitochondrial (DNAJA3).